Here is an 878-residue protein sequence, read N- to C-terminus: Alanine--tRNA ligase (878 aa).

His-562, His-566, Cys-670, and His-674 together coordinate Zn(2+).

Belongs to the class-II aminoacyl-tRNA synthetase family. It depends on Zn(2+) as a cofactor.

The protein resides in the cytoplasm. It carries out the reaction tRNA(Ala) + L-alanine + ATP = L-alanyl-tRNA(Ala) + AMP + diphosphate. Functionally, catalyzes the attachment of alanine to tRNA(Ala) in a two-step reaction: alanine is first activated by ATP to form Ala-AMP and then transferred to the acceptor end of tRNA(Ala). Also edits incorrectly charged Ser-tRNA(Ala) and Gly-tRNA(Ala) via its editing domain. The polypeptide is Alanine--tRNA ligase (Acinetobacter baylyi (strain ATCC 33305 / BD413 / ADP1)).